The chain runs to 265 residues: Polyprenol monophosphomannose synthase (265 aa).

The segment covering 1–10 has biased composition (basic and acidic residues); it reads MSVPGEREQG. The tract at residues 1 to 21 is disordered; the sequence is MSVPGEREQGAGEDPATVRPT.

It belongs to the glycosyltransferase 2 family. Interacts with Lnt (also called Ppm2, AC A0QZ13) upon coexpression in E.coli, which increases the PPM synthase activity of this protein.

The protein localises to the cytoplasm. The catalysed reaction is a di-trans,poly-cis-dolichyl phosphate + GDP-alpha-D-mannose = a di-trans,poly-cis-dolichyl beta-D-mannosyl phosphate + GDP. Functionally, transfers mannose from GDP-mannose to lipid acceptors to form polyprenol monophosphomannose (PPM); catalytic activity in vitro is enhanced by Lnt (AC A0QZ13). PMM is an alkai-stable sugar donor which adds mannose-phosphate residues to triacylated-PIM2, eventually leading to generation of the cell wall glycolipid lipoglycan modulins lipoarabinomannan (LAM) and lipomannan (LM). The chain is Polyprenol monophosphomannose synthase from Mycolicibacterium smegmatis (strain ATCC 700084 / mc(2)155) (Mycobacterium smegmatis).